The primary structure comprises 206 residues: Large ribosomal subunit protein uL4 (206 aa).

Residues 45–76 (RQGNQSAKTRAEVSGGGKKPWRQKGTGRARQG) are disordered.

This sequence belongs to the universal ribosomal protein uL4 family. Part of the 50S ribosomal subunit.

One of the primary rRNA binding proteins, this protein initially binds near the 5'-end of the 23S rRNA. It is important during the early stages of 50S assembly. It makes multiple contacts with different domains of the 23S rRNA in the assembled 50S subunit and ribosome. In terms of biological role, forms part of the polypeptide exit tunnel. The polypeptide is Large ribosomal subunit protein uL4 (Clostridium novyi (strain NT)).